The primary structure comprises 261 residues: Thiamine thiazole synthase (261 aa).

NAD(+) is bound by residues alanine 33, 52–53 (ER), glycine 60, valine 124, and 152–154 (HVD). Positions 154 and 169 each coordinate Fe cation. Methionine 219 contributes to the NAD(+) binding site. Arginine 229 contributes to the glycine binding site.

This sequence belongs to the THI4 family. As to quaternary structure, homooctamer; tetramer of dimers. It depends on Fe(2+) as a cofactor.

The catalysed reaction is hydrogen sulfide + glycine + NAD(+) = ADP-5-ethyl-4-methylthiazole-2-carboxylate + nicotinamide + 3 H2O + H(+). The protein operates within cofactor biosynthesis; thiamine diphosphate biosynthesis. Involved in the biosynthesis of the thiazole moiety of thiamine. Catalyzes the conversion of NAD and glycine to adenosine diphosphate 5-(2-hydroxyethyl)-4-methylthiazole-2-carboxylate (ADT), an adenylated thiazole intermediate, using free sulfide as a source of sulfur. This Pyrobaculum islandicum (strain DSM 4184 / JCM 9189 / GEO3) protein is Thiamine thiazole synthase.